A 306-amino-acid polypeptide reads, in one-letter code: Oligopeptide transport system permease protein OppB (306 aa).

The Cytoplasmic segment spans residues 1–11 (MLKFILRRCLE). Residues 12-32 (AIPTLFILITISFFMMRLAPG) traverse the membrane as a helical segment. The Periplasmic segment spans residues 33–99 (SPFTGERTLP…VASSFPVSAK (67 aa)). The region spanning 94 to 293 (FPVSAKLGAA…ALTILFNAIV (200 aa)) is the ABC transmembrane type-1 domain. The chain crosses the membrane as a helical span at residues 100–120 (LGAAAFFLAVILGVSAGVIAA). Over 121 to 137 (LKQNTKWDYTVMGLAMT) the chain is Cytoplasmic. A helical transmembrane segment spans residues 138 to 158 (GVVIPSFVVAPLLVMIFAIIL). Residues 159 to 169 (HWLPGGGWNGG) lie on the Periplasmic side of the membrane. The chain crosses the membrane as a helical span at residues 170–190 (ALKFMILPMVALSLAYIASIA). Over 191–229 (RITRGSMIEVLHSNFIRTARAKGLPMRRIILRHALKPAL) the chain is Cytoplasmic. Residues 230–250 (LPVLSYMGPAFVGIITGSMVI) traverse the membrane as a helical segment. Topologically, residues 251–279 (ETIYGLPGIGQLFVNGALNRDYSLVLSLT) are periplasmic. Residues 280 to 300 (ILVGALTILFNAIVDVLYAVI) traverse the membrane as a helical segment. Residues 301–306 (DPKIRY) lie on the Cytoplasmic side of the membrane.

The protein belongs to the binding-protein-dependent transport system permease family. OppBC subfamily. The complex is composed of two ATP-binding proteins (OppD and OppF), two transmembrane proteins (OppB and OppC) and a solute-binding protein (OppA).

It is found in the cell inner membrane. Part of the ABC transporter complex OppABCDF involved in the uptake of oligopeptides. Probably responsible for the translocation of the substrate across the membrane. The protein is Oligopeptide transport system permease protein OppB (oppB) of Shigella flexneri.